A 211-amino-acid polypeptide reads, in one-letter code: Mitotic spindle assembly checkpoint protein MAD2B (211 aa).

The region spanning 13–203 (QVVADVLCEF…SDILKMQLYV (191 aa)) is the HORMA domain. The interval 21–155 (EFLEVAVHLI…FTVLVHTREA (135 aa)) is mediates interaction with REV1 and REV3L and homodimerization. Positions 150–211 (VHTREAATRN…YVEERAHKGS (62 aa)) are mediates interaction with ipaB.

As to quaternary structure, homooligomer. Heterodimer with REV3L. This dimer forms the minimal DNA polymerase zeta complex (Pol-zeta2), with REV3L bearing DNA polymerase catalytic activity, although its activity is very low in this context. Component of the tetrameric Pol-zeta complex (Pol-zeta4), which consists of REV3L, MAD2L2, POLD2 and POLD3; Pol-zeta4 is the fully active form of DNA polymerase zeta. Component of the shieldin complex, consisting of SHLD1, SHLD2, SHLD3 and MAD2L2/REV7. Within the complex, SHLD2 forms a scaffold which interacts with a SHLD3-MAD2L2 subcomplex via its N-terminus, and with SHLD1 via its C-terminus. Interacts with REV1. Interacts with ADAM9. Interacts with CHAMP1. Interacts with FZR1 (in complex with the anaphase promoting complex APC). Interacts with CDC20; PubMed:11459825 could not detect the interaction. Interacts with RAN. Interacts with ELK1; the interaction is direct and recruits MAD2L2 to ELK1-specific promoters. May interact with the JNK kinases MAPK8 and/or MAPK9 to stimulate ELK1 phosphorylation and transcriptional activity upon DNA damage. Interacts with TCF7L2; prevents its binding to promoters and negatively modulates its transcriptional activity. Interacts with YY1AP1. Interacts with S.flexneri protein ipaB; prevents the interaction of MAD2L2 with FZR1 and CDC20 resulting in an activation of the anaphase-promoting complex APC and a cell cycle arrest. Interacts with PRCC; the interaction is direct. Interacts with POGZ. Interacts with ASTE1. As to expression, ubiquitously expressed.

The protein localises to the nucleus. The protein resides in the cytoplasm. It is found in the cytoskeleton. Its subcellular location is the spindle. It localises to the chromosome. Its function is as follows. Adapter protein able to interact with different proteins and involved in different biological processes. Mediates the interaction between the error-prone DNA polymerase zeta catalytic subunit REV3L and the inserter polymerase REV1, thereby mediating the second polymerase switching in translesion DNA synthesis. Translesion DNA synthesis releases the replication blockade of replicative polymerases, stalled in presence of DNA lesions. Component of the shieldin complex, which plays an important role in repair of DNA double-stranded breaks (DSBs). During G1 and S phase of the cell cycle, the complex functions downstream of TP53BP1 to promote non-homologous end joining (NHEJ) and suppress DNA end resection. Mediates various NHEJ-dependent processes including immunoglobulin class-switch recombination, and fusion of unprotected telomeres. May also regulate another aspect of cellular response to DNA damage through regulation of the JNK-mediated phosphorylation and activation of the transcriptional activator ELK1. Inhibits the FZR1- and probably CDC20-mediated activation of the anaphase promoting complex APC thereby regulating progression through the cell cycle. Regulates TCF7L2-mediated gene transcription and may play a role in epithelial-mesenchymal transdifferentiation. The chain is Mitotic spindle assembly checkpoint protein MAD2B (MAD2L2) from Homo sapiens (Human).